Here is a 522-residue protein sequence, read N- to C-terminus: E3 ubiquitin-protein ligase DMA2 (522 aa).

Disordered regions lie at residues 1–56 and 69–92; these read MYTP…RPAS and QNSQTASSSAAPDQRLFGTTPSNS. Residues 14 to 35 show a composition bias toward low complexity; the sequence is APTSSMTSNSSSASNANTTSSS. Residues 36–49 show a composition bias toward polar residues; the sequence is GINPRNRASGTPSN. Ser-206 bears the Phosphoserine mark. Glycyl lysine isopeptide (Lys-Gly) (interchain with G-Cter in ubiquitin) cross-links involve residues Lys-211, Lys-256, Lys-258, Lys-288, Lys-310, Lys-333, Lys-343, Lys-346, Lys-366, Lys-406, Lys-412, and Lys-423. Residues 295-358 enclose the FHA domain; it reads LVIGRYTERV…SGTFLNHQRL (64 aa). The RING-type; atypical zinc finger occupies 433-477; sequence CSICLCKIKPCQAIFISPCAHSWHFRCVRRLVMLSYPQFVCPNCR.

This sequence belongs to the DMA1 family. Post-translationally, UBC4-dependent autoubiquitination occurs at Lys-211, Lys-258, Lys-288, Lys-310, Lys-333, Lys-343, Lys-346, Lys-366, Lys-406, Lys-412 and Lys-423. UBC13/MMS2-dependent autoubiquitination occurs at Lys-258, Lys-310, Lys-346 and Lys-366. Lys-211, Lys-256, Lys-288, Lys-310, Lys-343, Lys-258, Lys-366 and Lys-412 are also ubiquitinated in trans by DMA1 E3 ligase in association with UBC4.

The protein resides in the cytoplasm. The enzyme catalyses S-ubiquitinyl-[E2 ubiquitin-conjugating enzyme]-L-cysteine + [acceptor protein]-L-lysine = [E2 ubiquitin-conjugating enzyme]-L-cysteine + N(6)-ubiquitinyl-[acceptor protein]-L-lysine.. Its function is as follows. E3 ubiquitin-protein ligase which functions in cell cycle retarding in conjunction with the UBC4 and UBC13/MMS2 complex, 2 E2 ubiquitin conjugating enzymes. Involved in nutritional control of the cell cycle. Required for proper spindle positioning, likely regulating septin ring deposition at the bud neck. The chain is E3 ubiquitin-protein ligase DMA2 (DMA2) from Saccharomyces cerevisiae (strain YJM789) (Baker's yeast).